Here is a 132-residue protein sequence, read N- to C-terminus: uncharacterized protein (132 aa).

2 helical membrane-spanning segments follow: residues Val12–Tyr32 and Leu37–Leu57.

The protein localises to the cell membrane. This is an uncharacterized protein from Methanocaldococcus jannaschii (strain ATCC 43067 / DSM 2661 / JAL-1 / JCM 10045 / NBRC 100440) (Methanococcus jannaschii).